We begin with the raw amino-acid sequence, 677 residues long: Fidgetin-like protein 1 (677 aa).

A compositionally biased stretch (polar residues) spans 203 to 216 (TSSAPSGESTTATF). Disordered stretches follow at residues 203–232 (TSSAPSGESTTATFHRTPLFGNTKKEPQSF), 249–324 (VPSG…SFNG), and 337–378 (GIFG…TDDR). A Glycyl lysine isopeptide (Lys-Gly) (interchain with G-Cter in SUMO2) cross-link involves residue Lys-226. Residues 264–280 (DSDTINMLSNPTLNKAP) show a composition bias toward polar residues. Residues 281–292 (SKTEDSGQREDN) show a composition bias toward basic and acidic residues. An N6-acetyllysine modification is found at Lys-341. A compositionally biased stretch (polar residues) spans 347–358 (SNKQDGSEQNGN). ATP-binding positions include Ala-407 and 447–452 (GTGKTL).

The protein belongs to the AAA ATPase family. Hexamer. Interacts (via N-terminal one-half region) with RAD51; the interaction is direct. Interacts (via N-terminal one-half region) with SPIDR (via the C-terminal region); the interaction is direct. Interacts with FIRRM; may regulate homologous recombination. Requires Mg(2+) as cofactor.

It is found in the nucleus. The protein resides in the cytoplasm. Its subcellular location is the perinuclear region. The catalysed reaction is ATP + H2O = ADP + phosphate + H(+). In terms of biological role, involved in DNA double-strand break (DBS) repair via homologous recombination (HR). Recruited at DSB sites independently of BRCA2, RAD51 and RAD51 paralogs in a H2AX-dependent manner. May regulate osteoblast proliferation and differentiation. May play a role in the control of male meiosis dynamic. This is Fidgetin-like protein 1 (Fignl1) from Rattus norvegicus (Rat).